A 203-amino-acid chain; its full sequence is Endo-type membrane-bound lytic murein transglycosylase A (203 aa).

The first 15 residues, 1–15 (MKLRWFAFLIVLLAG), serve as a signal peptide directing secretion. The N-palmitoyl cysteine moiety is linked to residue cysteine 16. Cysteine 16 is lipidated: S-diacylglycerol cysteine.

It belongs to the transglycosylase Slt family.

It is found in the cell outer membrane. It carries out the reaction Endolytic cleavage of the (1-&gt;4)-beta-glycosidic linkage between N-acetylmuramic acid (MurNAc) and N-acetylglucosamine (GlcNAc) residues in peptidoglycan with concomitant formation of a 1,6-anhydrobond in the MurNAc residue.. Its function is as follows. Murein-degrading enzyme. May play a role in recycling of muropeptides during cell elongation and/or cell division. Preferentially cleaves at a distance of more than two disaccharide units from the ends of the glycan chain. The chain is Endo-type membrane-bound lytic murein transglycosylase A from Shigella dysenteriae serotype 1 (strain Sd197).